Reading from the N-terminus, the 490-residue chain is Doublesex- and mab-3-related transcription factor A1 (490 aa).

A compositionally biased stretch (basic and acidic residues) spans methionine 1–glycine 13. The tract at residues methionine 1–alanine 31 is disordered. Low complexity predominate over residues alanine 20–alanine 31. Residues cysteine 86–arginine 133 constitute a DNA-binding region (DM). 2 disordered regions span residues glycine 152–glutamine 171 and aspartate 207–serine 289. A compositionally biased stretch (basic and acidic residues) spans aspartate 207 to asparagine 216. Polar residues-rich tracts occupy residues cysteine 217–asparagine 242 and proline 269–serine 289. Residues arginine 314–glutamine 349 enclose the DMA domain.

The protein belongs to the DMRT family. In terms of tissue distribution, widely expressed, with highest levels in ovary, testis, epididymis, preputial gland, vomeronasal organ, liver, salivary glands and heart. Also expressed throughout the brain with highest levels in the olfactory bulbs and medulla. Detected at similar levels in gonads of both sexes.

The protein resides in the nucleus. The polypeptide is Doublesex- and mab-3-related transcription factor A1 (Dmrta1) (Mus musculus (Mouse)).